The following is a 95-amino-acid chain: Putative pterin-4-alpha-carbinolamine dehydratase (95 aa).

It belongs to the pterin-4-alpha-carbinolamine dehydratase family.

It catalyses the reaction (4aS,6R)-4a-hydroxy-L-erythro-5,6,7,8-tetrahydrobiopterin = (6R)-L-erythro-6,7-dihydrobiopterin + H2O. In Nocardia farcinica (strain IFM 10152), this protein is Putative pterin-4-alpha-carbinolamine dehydratase.